The primary structure comprises 236 residues: 2-C-methyl-D-erythritol 4-phosphate cytidylyltransferase (236 aa).

The protein belongs to the IspD/TarI cytidylyltransferase family. IspD subfamily. Homodimer.

It catalyses the reaction 2-C-methyl-D-erythritol 4-phosphate + CTP + H(+) = 4-CDP-2-C-methyl-D-erythritol + diphosphate. The protein operates within isoprenoid biosynthesis; isopentenyl diphosphate biosynthesis via DXP pathway; isopentenyl diphosphate from 1-deoxy-D-xylulose 5-phosphate: step 2/6. In terms of biological role, catalyzes the formation of 4-diphosphocytidyl-2-C-methyl-D-erythritol from CTP and 2-C-methyl-D-erythritol 4-phosphate (MEP). This chain is 2-C-methyl-D-erythritol 4-phosphate cytidylyltransferase, found in Escherichia coli O17:K52:H18 (strain UMN026 / ExPEC).